Here is a 658-residue protein sequence, read N- to C-terminus: A-type ATP synthase subunit I (658 aa).

Transmembrane regions (helical) follow at residues 383–403 (MAFV…YGII), 427–447 (IIMM…NGFI), 475–495 (ILIM…ILGA), 507–526 (ALGS…LYLV), 530–552 (IFGA…LFGL), 568–588 (LLAL…LTGL), and 591–611 (EMIP…GHIA).

It belongs to the V-ATPase 116 kDa subunit family. In terms of assembly, has multiple subunits with at least A(3), B(3), C, D, E, F, H, I and proteolipid K(x).

The protein localises to the cell membrane. Component of the A-type ATP synthase that produces ATP from ADP in the presence of a proton gradient across the membrane. In Methanothermobacter thermautotrophicus (strain ATCC 29096 / DSM 1053 / JCM 10044 / NBRC 100330 / Delta H) (Methanobacterium thermoautotrophicum), this protein is A-type ATP synthase subunit I.